We begin with the raw amino-acid sequence, 592 residues long: Condensin-2 complex subunit H2 (592 aa).

Disordered stretches follow at residues 89 to 116 and 261 to 285; these read NKKRDKQGSSSDGNQEQAPSGSEGDGCE and EAPSEGRMLRPRPAVQPVSEEPKQL. Over residues 96–108 the composition is skewed to polar residues; the sequence is GSSSDGNQEQAPS.

Belongs to the CND2 H2 (condensin-2 subunit 2) family. In terms of assembly, component of the condensin-2 complex, which contains the smc2 and smc4 heterodimer, and three non SMC subunits, ncapg2, ncaph2 and ncapd3 that probably regulate the complex.

Its subcellular location is the nucleus. In terms of biological role, regulatory subunit of the condensin-2 complex, a complex that seems to provide chromosomes with an additional level of organization and rigidity and in establishing mitotic chromosome architecture. This Danio rerio (Zebrafish) protein is Condensin-2 complex subunit H2 (ncaph2).